Here is a 340-residue protein sequence, read N- to C-terminus: UPF0324 membrane protein BC_5174 (340 aa).

A run of 10 helical transmembrane segments spans residues 13 to 35, 40 to 59, 99 to 118, 128 to 150, 157 to 179, 189 to 211, 218 to 240, 255 to 277, 279 to 301, and 316 to 338; these read FGFS…LAEL, IMGQ…AAIG, VLVI…YGLT, GILT…APQV, TAVG…TLLY, YGVF…APGG, AVIV…GLWF, LPIP…GIIP, VVAG…GLGL, and FVAG…YALG.

Belongs to the UPF0324 family.

The protein resides in the cell membrane. This is UPF0324 membrane protein BC_5174 from Bacillus cereus (strain ATCC 14579 / DSM 31 / CCUG 7414 / JCM 2152 / NBRC 15305 / NCIMB 9373 / NCTC 2599 / NRRL B-3711).